The chain runs to 97 residues: Co-chaperonin GroES (97 aa).

The protein belongs to the GroES chaperonin family. In terms of assembly, heptamer of 7 subunits arranged in a ring. Interacts with the chaperonin GroEL.

Its subcellular location is the cytoplasm. Together with the chaperonin GroEL, plays an essential role in assisting protein folding. The GroEL-GroES system forms a nano-cage that allows encapsulation of the non-native substrate proteins and provides a physical environment optimized to promote and accelerate protein folding. GroES binds to the apical surface of the GroEL ring, thereby capping the opening of the GroEL channel. In Baumannia cicadellinicola subsp. Homalodisca coagulata, this protein is Co-chaperonin GroES.